We begin with the raw amino-acid sequence, 264 residues long: Glutamate racemase (264 aa).

Residues 10–11 and 42–43 contribute to the substrate site; these read DS and YG. Catalysis depends on C73, which acts as the Proton donor/acceptor. Residue 74–75 coordinates substrate; the sequence is NT. C183 serves as the catalytic Proton donor/acceptor. 184-185 serves as a coordination point for substrate; sequence TH.

Belongs to the aspartate/glutamate racemases family.

The enzyme catalyses L-glutamate = D-glutamate. Its pathway is cell wall biogenesis; peptidoglycan biosynthesis. Its function is as follows. Provides the (R)-glutamate required for cell wall biosynthesis. This Streptococcus agalactiae serotype III (strain NEM316) protein is Glutamate racemase.